The following is a 246-amino-acid chain: Ribonuclease 3 (246 aa).

Positions 10-143 (LERLEQALDY…LLGAIYLDGG (134 aa)) constitute an RNase III domain. Glu56 contacts Mg(2+). The active site involves Asp60. Mg(2+) contacts are provided by Asn129 and Glu132. Glu132 is an active-site residue. The DRBM domain occupies 170–239 (DYKTLLQEYL…AQQALELLIE (70 aa)).

It belongs to the ribonuclease III family. In terms of assembly, homodimer. Requires Mg(2+) as cofactor.

Its subcellular location is the cytoplasm. The enzyme catalyses Endonucleolytic cleavage to 5'-phosphomonoester.. In terms of biological role, digests double-stranded RNA. Involved in the processing of primary rRNA transcript to yield the immediate precursors to the large and small rRNAs (23S and 16S). Processes some mRNAs, and tRNAs when they are encoded in the rRNA operon. Processes pre-crRNA and tracrRNA of type II CRISPR loci if present in the organism. This Magnetococcus marinus (strain ATCC BAA-1437 / JCM 17883 / MC-1) protein is Ribonuclease 3.